Here is a 155-residue protein sequence, read N- to C-terminus: Small ribosomal subunit protein uS7cz/uS7cy (155 aa).

Belongs to the universal ribosomal protein uS7 family. Part of the 30S ribosomal subunit.

The protein localises to the plastid. The protein resides in the chloroplast. In terms of biological role, one of the primary rRNA binding proteins, it binds directly to 16S rRNA where it nucleates assembly of the head domain of the 30S subunit. This Amborella trichopoda protein is Small ribosomal subunit protein uS7cz/uS7cy (rps7-A).